The following is a 181-amino-acid chain: Protein Syd (181 aa).

It belongs to the Syd family.

Its subcellular location is the cell inner membrane. Functionally, interacts with the SecY protein in vivo. May bind preferentially to an uncomplexed state of SecY, thus functioning either as a chelating agent for excess SecY in the cell or as a regulatory factor that negatively controls the translocase function. This chain is Protein Syd, found in Salmonella arizonae (strain ATCC BAA-731 / CDC346-86 / RSK2980).